A 298-amino-acid polypeptide reads, in one-letter code: Tyrosine recombinase XerC (298 aa).

The 87-residue stretch at 2 to 88 (TDLHTDVERY…ALRSFFDWLV (87 aa)) folds into the Core-binding (CB) domain. Residues 109-288 (HLPKNIDVDD…DFQHLASVYD (180 aa)) form the Tyr recombinase domain. Active-site residues include R148, K172, H240, R243, and H266. Y275 functions as the O-(3'-phospho-DNA)-tyrosine intermediate in the catalytic mechanism.

The protein belongs to the 'phage' integrase family. XerC subfamily. As to quaternary structure, forms a cyclic heterotetrameric complex composed of two molecules of XerC and two molecules of XerD, in which XerC interacts with XerD via its C-terminal region, XerD interacts with XerC via its C-terminal region and so on.

The protein localises to the cytoplasm. Its activity is regulated as follows. FtsK may regulate the catalytic switch between XerC and XerD in the heterotetrameric complex during the two steps of the recombination process. In terms of biological role, site-specific tyrosine recombinase, which acts by catalyzing the cutting and rejoining of the recombining DNA molecules. Binds cooperatively to specific DNA consensus sequences that are separated from XerD binding sites by a short central region, forming the heterotetrameric XerC-XerD complex that recombines DNA substrates. The complex is essential to convert dimers of the bacterial chromosome into monomers to permit their segregation at cell division. It also contributes to the segregational stability of plasmids. In the complex XerC specifically exchanges the top DNA strands. The chain is Tyrosine recombinase XerC from Shigella dysenteriae serotype 1 (strain Sd197).